A 127-amino-acid polypeptide reads, in one-letter code: UPF0102 protein Reut_A3265 (127 aa).

It belongs to the UPF0102 family.

In Cupriavidus pinatubonensis (strain JMP 134 / LMG 1197) (Cupriavidus necator (strain JMP 134)), this protein is UPF0102 protein Reut_A3265.